We begin with the raw amino-acid sequence, 350 residues long: Heme A synthase (350 aa).

The next 8 helical transmembrane spans lie at 14 to 34, 95 to 115, 125 to 145, 162 to 182, 202 to 222, 260 to 280, 296 to 316, and 317 to 337; these read VAIW…IGGF, YVHR…FIYF, VVIK…AGWY, LALH…QFFD, VGII…VAGL, VQFI…ILTV, IIQI…AIAI, and AHQV…CYLR. His264 contacts heme. Residue His318 participates in heme binding.

It belongs to the COX15/CtaA family. Type 2 subfamily. Interacts with CtaB. Requires heme b as cofactor.

Its subcellular location is the cell membrane. It carries out the reaction Fe(II)-heme o + 2 A + H2O = Fe(II)-heme a + 2 AH2. It participates in porphyrin-containing compound metabolism; heme A biosynthesis; heme A from heme O: step 1/1. In terms of biological role, catalyzes the conversion of heme O to heme A by two successive hydroxylations of the methyl group at C8. The first hydroxylation forms heme I, the second hydroxylation results in an unstable dihydroxymethyl group, which spontaneously dehydrates, resulting in the formyl group of heme A. This Wolbachia pipientis wMel protein is Heme A synthase.